The primary structure comprises 564 residues: Glutamyl-tRNA(Gln) amidotransferase subunit B, mitochondrial (564 aa).

Residues 1 to 88 constitute a mitochondrion transit peptide; it reads MIRQCVSHRG…DTDAKLFSRA (88 aa). Positions 26–63 are disordered; that stretch reads PFHHPSPRPLGRKNWSTSDEAKSKRAAMRKGGAPPPEH.

It belongs to the GatB/GatE family. GatB subfamily. In terms of assembly, subunit of the heterotrimeric GatCAB amidotransferase (AdT) complex, composed of A, B and C subunits.

It localises to the mitochondrion. The catalysed reaction is L-glutamyl-tRNA(Gln) + L-glutamine + ATP + H2O = L-glutaminyl-tRNA(Gln) + L-glutamate + ADP + phosphate + H(+). Allows the formation of correctly charged Gln-tRNA(Gln) through the transamidation of misacylated Glu-tRNA(Gln) in the mitochondria. The reaction takes place in the presence of glutamine and ATP through an activated gamma-phospho-Glu-tRNA(Gln). The polypeptide is Glutamyl-tRNA(Gln) amidotransferase subunit B, mitochondrial (Ajellomyces capsulatus (strain G186AR / H82 / ATCC MYA-2454 / RMSCC 2432) (Darling's disease fungus)).